Consider the following 168-residue polypeptide: 3-isopropylmalate dehydratase small subunit (168 aa).

This sequence belongs to the LeuD family. LeuD type 2 subfamily. As to quaternary structure, heterodimer of LeuC and LeuD.

The enzyme catalyses (2R,3S)-3-isopropylmalate = (2S)-2-isopropylmalate. It participates in amino-acid biosynthesis; L-leucine biosynthesis; L-leucine from 3-methyl-2-oxobutanoate: step 2/4. Functionally, catalyzes the isomerization between 2-isopropylmalate and 3-isopropylmalate, via the formation of 2-isopropylmaleate. The chain is 3-isopropylmalate dehydratase small subunit from Thermodesulfovibrio yellowstonii (strain ATCC 51303 / DSM 11347 / YP87).